Reading from the N-terminus, the 172-residue chain is Keratin-associated protein 13-1 (172 aa).

5 tandem repeats follow at residues 46 to 55, 56 to 65, 66 to 75, 76 to 85, and 92 to 101. The 5 X 10 AA approximate repeats stretch occupies residues 46 to 101; it reads CQLGSSLYRGCQQTCWEPTSCQTSYVESSPCQTSCYRPRTSLLCSPCQTTYSGSLG.

It belongs to the PMG family. Interacts with hair keratins. As to expression, weak expression seen in the late matrix and entire cortex area of the hair follicle.

In the hair cortex, hair keratin intermediate filaments are embedded in an interfilamentous matrix, consisting of hair keratin-associated proteins (KRTAP), which are essential for the formation of a rigid and resistant hair shaft through their extensive disulfide bond cross-linking with abundant cysteine residues of hair keratins. The matrix proteins include the high-sulfur and high-glycine-tyrosine keratins. This chain is Keratin-associated protein 13-1 (KRTAP13-1), found in Homo sapiens (Human).